A 273-amino-acid polypeptide reads, in one-letter code: 4-hydroxy-tetrahydrodipicolinate reductase (273 aa).

Residues G8 to M13, E34, G102 to T104, and S128 to M131 each bind NAD(+). The Proton donor/acceptor role is filled by H160. H161 lines the (S)-2,3,4,5-tetrahydrodipicolinate pocket. The active-site Proton donor is the K164. G170–T171 is a (S)-2,3,4,5-tetrahydrodipicolinate binding site.

Belongs to the DapB family.

The protein localises to the cytoplasm. The catalysed reaction is (S)-2,3,4,5-tetrahydrodipicolinate + NAD(+) + H2O = (2S,4S)-4-hydroxy-2,3,4,5-tetrahydrodipicolinate + NADH + H(+). The enzyme catalyses (S)-2,3,4,5-tetrahydrodipicolinate + NADP(+) + H2O = (2S,4S)-4-hydroxy-2,3,4,5-tetrahydrodipicolinate + NADPH + H(+). It functions in the pathway amino-acid biosynthesis; L-lysine biosynthesis via DAP pathway; (S)-tetrahydrodipicolinate from L-aspartate: step 4/4. Its function is as follows. Catalyzes the conversion of 4-hydroxy-tetrahydrodipicolinate (HTPA) to tetrahydrodipicolinate. This chain is 4-hydroxy-tetrahydrodipicolinate reductase, found in Methanobrevibacter smithii (strain ATCC 35061 / DSM 861 / OCM 144 / PS).